A 504-amino-acid polypeptide reads, in one-letter code: Maturase K (504 aa).

Belongs to the intron maturase 2 family. MatK subfamily.

The protein resides in the plastid. Its subcellular location is the chloroplast. Usually encoded in the trnK tRNA gene intron. Probably assists in splicing its own and other chloroplast group II introns. This Turritis glabra (Tower mustard) protein is Maturase K.